Here is a 586-residue protein sequence, read N- to C-terminus: Pyruvate kinase (586 aa).

A substrate-binding site is contributed by Arg-32. Asn-34, Ser-36, Asp-66, and Thr-67 together coordinate K(+). Asn-34 to His-37 serves as a coordination point for ATP. ATP contacts are provided by Arg-73 and Lys-156. Residue Glu-222 coordinates Mg(2+). Positions 245, 246, and 278 each coordinate substrate. Asp-246 contacts Mg(2+).

The protein belongs to the pyruvate kinase family. It in the C-terminal section; belongs to the PEP-utilizing enzyme family. Homotetramer. Mg(2+) is required as a cofactor. K(+) serves as cofactor.

The enzyme catalyses pyruvate + ATP = phosphoenolpyruvate + ADP + H(+). It functions in the pathway carbohydrate degradation; glycolysis; pyruvate from D-glyceraldehyde 3-phosphate: step 5/5. In Sporosarcina psychrophila (Bacillus psychrophilus), this protein is Pyruvate kinase (pyk).